A 44-amino-acid polypeptide reads, in one-letter code: Antibacterial protein 2 homolog (44 aa).

The protein belongs to the staphylococcal hemolytic protein family.

It localises to the secreted. Functionally, has hemolytic activity and also inhibits the growth of gonococci. In Staphylococcus haemolyticus (strain JCSC1435), this protein is Antibacterial protein 2 homolog.